A 293-amino-acid chain; its full sequence is 4-diphosphocytidyl-2-C-methyl-D-erythritol kinase (293 aa).

The active site involves Lys16. 99 to 109 is an ATP binding site; sequence PMGAGLGGGSS. Asp141 is an active-site residue.

This sequence belongs to the GHMP kinase family. IspE subfamily.

The enzyme catalyses 4-CDP-2-C-methyl-D-erythritol + ATP = 4-CDP-2-C-methyl-D-erythritol 2-phosphate + ADP + H(+). It participates in isoprenoid biosynthesis; isopentenyl diphosphate biosynthesis via DXP pathway; isopentenyl diphosphate from 1-deoxy-D-xylulose 5-phosphate: step 3/6. Functionally, catalyzes the phosphorylation of the position 2 hydroxy group of 4-diphosphocytidyl-2C-methyl-D-erythritol. The polypeptide is 4-diphosphocytidyl-2-C-methyl-D-erythritol kinase (Burkholderia mallei (strain NCTC 10247)).